Here is a 178-residue protein sequence, read N- to C-terminus: uncharacterized protein (178 aa).

A signal peptide spans 1–20 (MKKLLVASLALLILTPVALA).

This is an uncharacterized protein from Archaeoglobus fulgidus (strain ATCC 49558 / DSM 4304 / JCM 9628 / NBRC 100126 / VC-16).